The following is a 384-amino-acid chain: Carbamoyl phosphate synthase small chain (384 aa).

A CPSase region spans residues 1–193 (MTKPATTPAI…DSHPEIPASE (193 aa)). Positions 51, 245, and 247 each coordinate L-glutamine. In terms of domain architecture, Glutamine amidotransferase type-1 spans 197–384 (HVVAYDYGVK…ISAMAPVVDR (188 aa)). The Nucleophile role is filled by cysteine 273. Leucine 274, glutamine 277, asparagine 315, glycine 317, and phenylalanine 318 together coordinate L-glutamine. Catalysis depends on residues histidine 357 and glutamate 359.

It belongs to the CarA family. As to quaternary structure, composed of two chains; the small (or glutamine) chain promotes the hydrolysis of glutamine to ammonia, which is used by the large (or ammonia) chain to synthesize carbamoyl phosphate. Tetramer of heterodimers (alpha,beta)4.

It carries out the reaction hydrogencarbonate + L-glutamine + 2 ATP + H2O = carbamoyl phosphate + L-glutamate + 2 ADP + phosphate + 2 H(+). It catalyses the reaction L-glutamine + H2O = L-glutamate + NH4(+). It participates in amino-acid biosynthesis; L-arginine biosynthesis; carbamoyl phosphate from bicarbonate: step 1/1. Its pathway is pyrimidine metabolism; UMP biosynthesis via de novo pathway; (S)-dihydroorotate from bicarbonate: step 1/3. Small subunit of the glutamine-dependent carbamoyl phosphate synthetase (CPSase). CPSase catalyzes the formation of carbamoyl phosphate from the ammonia moiety of glutamine, carbonate, and phosphate donated by ATP, constituting the first step of 2 biosynthetic pathways, one leading to arginine and/or urea and the other to pyrimidine nucleotides. The small subunit (glutamine amidotransferase) binds and cleaves glutamine to supply the large subunit with the substrate ammonia. The protein is Carbamoyl phosphate synthase small chain of Stutzerimonas stutzeri (Pseudomonas stutzeri).